The sequence spans 218 residues: Uracil-DNA glycosylase (218 aa).

Asp59 (proton acceptor) is an active-site residue.

This sequence belongs to the uracil-DNA glycosylase (UDG) superfamily. UNG family.

Its subcellular location is the cytoplasm. It catalyses the reaction Hydrolyzes single-stranded DNA or mismatched double-stranded DNA and polynucleotides, releasing free uracil.. Functionally, excises uracil residues from the DNA which can arise as a result of misincorporation of dUMP residues by DNA polymerase or due to deamination of cytosine. The polypeptide is Uracil-DNA glycosylase (Staphylococcus aureus (strain JH1)).